Consider the following 491-residue polypeptide: Histamine H1 receptor (491 aa).

At 1-30 (MTCPNSSCVFEDKMCQGNKTAPANDAQLTP) the chain is on the extracellular side. N-linked (GlcNAc...) asparagine glycans are attached at residues N5 and N18. Residues 31–51 (LVVVLSTISLVTVGLNLLVLY) traverse the membrane as a helical segment. Residues 52-65 (AVRSERKLHTVGNL) are Cytoplasmic-facing. The helical transmembrane segment at 66–90 (YIVSLSVADLIVGVVVMPMNILYLL) threads the bilayer. Topologically, residues 91-98 (MSRWSLGR) are extracellular. A helical membrane pass occupies residues 99 to 124 (PLCLFWLSMDYVASTASIFSVFILCI). A disulfide bridge links C101 with C181. 2 residues coordinate histamine: D108 and T113. The important for agonist binding stretch occupies residues 108-113 (DYVAST). The Cytoplasmic segment spans residues 125–145 (DRYRSVQQPLKYLRYRTKTRA). T141 and T143 each carry phosphothreonine. The chain crosses the membrane as a helical span at residues 146–165 (SITILAAWFLSFLWIIPILG). Residues 166-189 (WRHFQPKTPEPREDKCETDFYNVT) are Extracellular-facing. Residues 190–212 (WFKVMTAIINFYLPTLLMLWFYA) traverse the membrane as a helical segment. N199 contributes to the histamine binding site. Topologically, residues 213-420 (KIYKAVRQHC…MNRERKAAKQ (208 aa)) are cytoplasmic. Phosphoserine is present on S231. Disordered stretches follow at residues 246-297 (QVGA…KEEK) and 360-385 (QSFS…SESS). Residues 252 to 262 (PGKESPWEVLK) are compositionally biased toward basic and acidic residues. A phosphoserine mark is found at S384, S400, and S402. Residues 421 to 444 (LGFIMAAFIICWIPYFIFFMVIAF) form a helical membrane-spanning segment. Residues 428 to 432 (FIICW) are important for agonist binding. Y435 is a histamine binding site. C445 and C448 form a disulfide bridge. Residues 445–450 (CESCCN) lie on the Extracellular side of the membrane. A helical membrane pass occupies residues 451–473 (QHVHMFTIWLGYINSTLNPLIYP). At 474–491 (LCNENFKKTFKKILHIRS) the chain is on the cytoplasmic side.

Belongs to the G-protein coupled receptor 1 family. Phosphorylation at sites in the second and third cytoplasmic loops independently contribute to agonist-induced receptor down-regulation. In terms of tissue distribution, brain, lung, small intestine, uterus, adrenal medulla and spleen.

It localises to the cell membrane. In terms of biological role, G-protein-coupled receptor for histamine, a biogenic amine that functions as an immune modulator and a neurotransmitter. Through the H1 receptor, histamine mediates the contraction of smooth muscles and increases capillary permeability due to contraction of terminal venules. Also mediates neurotransmission in the central nervous system and thereby regulates circadian rhythms, emotional and locomotor activities as well as cognitive functions. The protein is Histamine H1 receptor of Bos taurus (Bovine).